The following is a 256-amino-acid chain: DNA repair protein RecO (256 aa).

Belongs to the RecO family.

Functionally, involved in DNA repair and RecF pathway recombination. This is DNA repair protein RecO from Nocardia farcinica (strain IFM 10152).